The chain runs to 61 residues: MANTSKVVKAARGHKFAVQNYSRCSRCGRARGYYRFFGMCRICIREMAHKGELPGVKKSSW.

4 residues coordinate Zn(2+): cysteine 24, cysteine 27, cysteine 40, and cysteine 43.

The protein belongs to the universal ribosomal protein uS14 family. Zinc-binding uS14 subfamily. In terms of assembly, part of the 30S ribosomal subunit. Contacts proteins S3 and S10. Zn(2+) serves as cofactor.

Its function is as follows. Binds 16S rRNA, required for the assembly of 30S particles and may also be responsible for determining the conformation of the 16S rRNA at the A site. In Deinococcus deserti (strain DSM 17065 / CIP 109153 / LMG 22923 / VCD115), this protein is Small ribosomal subunit protein uS14.